The chain runs to 550 residues: MGNCLSCCEKSKDEQYEPLLADREREAVADLLSFLEDRNEVNFYSEEPLRALTILAYSDNLDLQRSAALAFAEITEKDVREVDRETIEPVLFLLQSPDAEIQRAASVALGNLAVNAENKALVVKLNGLDLLIRQMMSPHVEVQCNAVGCITNLATLDENKSKIAHSGALGPLTRLAKSKDIRVQRNATGALLNMTHSYENRQQLVSAGTIPVLVSLLPSSDTDVQYYCTTSISNIAVDAVHRKRLAQSEPKLVRSLIQLMDTSSPKVQCQAALALRNLASDERYQIEIVQSNALPSLLRLLRSSYLPLILASVACIRNISIHPLNESPIIDAGFLRPLVDLLSCTENEEIQCHAVSTLRNLAASSERNKRAIIEANAIQKLRCLILDAPVSVQSEMTACLAVLALSDEFKSYLLNFGICNVLIPLTDSMSIEVQGNSAAALGNLSSNVDDYSRFIECWDSPAGGIHGYLVRFLSSEDSTFAHIAAWTIVQLLEAGVPRLTAFIQSSDDIIELLNDIVARDANNGEYEDGEGDVILLSGRALHLIEQDTDS.

The N-myristoyl glycine moiety is linked to residue Gly-2. S-palmitoyl cysteine attachment occurs at residues Cys-4 and Cys-7. 8 ARM repeats span residues 75–114 (TEKD…NLAV), 116–155 (AENK…NLAT), 157–196 (DENK…NMTH), 198–237 (YENR…NIAV), 241–280 (HRKR…NLAS), 282–321 (ERYQ…NISI), 323–363 (PLNE…NLAA), and 454–493 (FIEC…QLLE). Position 548 is a phosphothreonine (Thr-548). Ser-550 is modified (phosphoserine).

Belongs to the beta-catenin family.

The protein localises to the golgi apparatus membrane. Its subcellular location is the vacuole membrane. Its function is as follows. Functions in both vacuole inheritance and protein targeting from the cytoplasm to vacuole. In Schizosaccharomyces pombe (strain 972 / ATCC 24843) (Fission yeast), this protein is Vacuolar protein 8 (vac8).